A 256-amino-acid chain; its full sequence is Doublecortin domain-containing protein (256 aa).

The interval 71–103 (NVFERLTDTAYYTGSHRERFDEFGNGRGIAGRE) is partial p25alpha domain. The Doublecortin domain maps to 152–226 (RLMWLYRNGD…AKYLCTSGEP (75 aa)).

The protein resides in the cytoplasm. Its subcellular location is the cytoskeleton. Specifically required in the formation and maintenance of the conoid fibers; the conoid is a component of the cytoskeletal apical complex, which is composed of a left-handed spiral of 14 fibers made from a nontubular tubulin polymer. Promotes the organization, curvature, and stability of the conoid fibers, and probably bridges other conoid components to the tubulin core. The sequence is that of Doublecortin domain-containing protein from Toxoplasma gondii (strain ATCC 50861 / VEG).